Reading from the N-terminus, the 383-residue chain is Chaperone protein DnaJ (383 aa).

The region spanning 5-70 is the J domain; sequence DYYELLGVEK…QKRAAYDRFG (66 aa). The CR-type zinc-finger motif lies at 137–215; the sequence is GKTATVKVPS…CGGSGRTRKE (79 aa). Residues Cys150, Cys153, Cys167, Cys170, Cys189, Cys192, Cys203, and Cys206 each coordinate Zn(2+). CXXCXGXG motif repeat units lie at residues 150-157, 167-174, 189-196, and 203-210; these read CEDCKGTG, CSACHGHG, CPTCQGMG, and CRSCGGSG.

This sequence belongs to the DnaJ family. In terms of assembly, homodimer. Zn(2+) is required as a cofactor.

Its subcellular location is the cytoplasm. Its function is as follows. Participates actively in the response to hyperosmotic and heat shock by preventing the aggregation of stress-denatured proteins and by disaggregating proteins, also in an autonomous, DnaK-independent fashion. Unfolded proteins bind initially to DnaJ; upon interaction with the DnaJ-bound protein, DnaK hydrolyzes its bound ATP, resulting in the formation of a stable complex. GrpE releases ADP from DnaK; ATP binding to DnaK triggers the release of the substrate protein, thus completing the reaction cycle. Several rounds of ATP-dependent interactions between DnaJ, DnaK and GrpE are required for fully efficient folding. Also involved, together with DnaK and GrpE, in the DNA replication of plasmids through activation of initiation proteins. This is Chaperone protein DnaJ from Paramagnetospirillum magneticum (strain ATCC 700264 / AMB-1) (Magnetospirillum magneticum).